The primary structure comprises 227 residues: UPF0758 protein lpp2553 (227 aa).

Residues 102–225 (RLSNTQQTYA…YSIFAENKWV (124 aa)) enclose the MPN domain. Residues H173, H175, and D186 each coordinate Zn(2+). A JAMM motif motif is present at residues 173–186 (HNHPSGLSDASQQD).

This sequence belongs to the UPF0758 family.

The protein is UPF0758 protein lpp2553 of Legionella pneumophila (strain Paris).